Consider the following 41-residue polypeptide: Photosystem I reaction center subunit IX (41 aa).

A helical transmembrane segment spans residues tyrosine 7–isoleucine 27.

Belongs to the PsaJ family.

It is found in the cellular thylakoid membrane. Its function is as follows. May help in the organization of the PsaE and PsaF subunits. The sequence is that of Photosystem I reaction center subunit IX from Cyanothece sp. (strain PCC 7425 / ATCC 29141).